The following is an 87-amino-acid chain: MNNYDKTMRFNLDDVPKENVKSVLTNVYNTLKERGYDPVNQIVGYLLSGDPAYIPRHNEARNQIRRIDRDEIMEELVSNYLNASKDN.

Belongs to the UPF0297 family.

This Staphylococcus carnosus (strain TM300) protein is UPF0297 protein Sca_1229.